The following is a 508-amino-acid chain: Aspartyl/glutamyl-tRNA(Asn/Gln) amidotransferase subunit B (508 aa).

It belongs to the GatB/GatE family. GatB subfamily. In terms of assembly, heterotrimer of A, B and C subunits.

It catalyses the reaction L-glutamyl-tRNA(Gln) + L-glutamine + ATP + H2O = L-glutaminyl-tRNA(Gln) + L-glutamate + ADP + phosphate + H(+). The enzyme catalyses L-aspartyl-tRNA(Asn) + L-glutamine + ATP + H2O = L-asparaginyl-tRNA(Asn) + L-glutamate + ADP + phosphate + 2 H(+). Allows the formation of correctly charged Asn-tRNA(Asn) or Gln-tRNA(Gln) through the transamidation of misacylated Asp-tRNA(Asn) or Glu-tRNA(Gln) in organisms which lack either or both of asparaginyl-tRNA or glutaminyl-tRNA synthetases. The reaction takes place in the presence of glutamine and ATP through an activated phospho-Asp-tRNA(Asn) or phospho-Glu-tRNA(Gln). The protein is Aspartyl/glutamyl-tRNA(Asn/Gln) amidotransferase subunit B of Salinibacter ruber (strain DSM 13855 / M31).